The chain runs to 49 residues: Toxic protein HokB (49 aa).

A helical membrane pass occupies residues 4 to 24 (NPLVVCLLIICITILTFTLLT).

The protein belongs to the Hok/Gef family.

Its subcellular location is the cell inner membrane. In terms of biological role, toxic component of a type I toxin-antitoxin (TA) system. When overexpressed kills cells within minutes; causes collapse of the transmembrane potential and arrest of respiration. Expression leads to membrane depolarization; when protein levels are high enough depolarization probably leads to lowered metabolic activity which in turn induces some cells to enter the persistent state in which they transiently survive antibiotic exposure. Its toxic effect is probably neutralized by antisense antitoxin RNA SokB, which is encoded in trans on the opposite DNA strand. This is Toxic protein HokB from Escherichia coli (strain K12).